Here is a 206-residue protein sequence, read N- to C-terminus: Large ribosomal subunit protein eL13z (206 aa).

Positions T185–K206 are disordered. Over residues N186–K195 the composition is skewed to basic residues. Residues R196–K206 are compositionally biased toward basic and acidic residues.

The protein belongs to the eukaryotic ribosomal protein eL13 family.

Its subcellular location is the cytoplasm. The polypeptide is Large ribosomal subunit protein eL13z (RPL13B) (Arabidopsis thaliana (Mouse-ear cress)).